The primary structure comprises 542 residues: MAIRLNHSVIPVSVKLGAPTRVSARSSLPFSVGDWRGVSTFSGARPLVLAKVKLRAESTEEDRVPIDDDDDSTDQLVDEEIVHFEERDFAGTACVPVYVMLPLGVIDMNSEVVEPEELLDQLRTLKSVNVDGVMVDCWWGIVESHTPQVYNWSGYKKLFQMIRELGLKIQVVMSFHECGGNVGDDVHIQIPEWVREIGQSNPDIYFTDSAGRRNTECLTWGIDKQRVLRGRTALEVYFDYMRSFRVEFDEFFEEKIIPEIEVGLGPCGELRYPSYPAQFGWKYPGIGEFQCYDKYLMNSLKEAAEVRGHSFWGRGPDNTETYNSTPHGTGFFRDGGDYDSYYGRFFLNWYSRVLIDHGDRVLAMANLAFEGTCIAAKLSGIHWWYKTASHAAELTAGFYNSSNRDGYGPIAAMFKKHDAALNFTCVELRTLDQHEDFPEALADPEGLVWQVLNAAWDASIPVASENALPCYDREGYNKILENAKPLTDPDGRHLSCFTYLRLNPTLMESQNFKEFERFLKRMHGEAVPDLGLAPGTQETNPE.

Residues 1–55 (MAIRLNHSVIPVSVKLGAPTRVSARSSLPFSVGDWRGVSTFSGARPLVLAKVKLR) constitute a chloroplast transit peptide. Residues D136, H176, and D184 each contribute to the substrate site. Residue E269 is the Proton donor of the active site. Substrate-binding residues include K377, H382, and T424. E465 functions as the Proton acceptor in the catalytic mechanism. Substrate-binding positions include 466–467 (NA) and R501.

It belongs to the glycosyl hydrolase 14 family.

It is found in the plastid. It localises to the chloroplast. It catalyses the reaction Hydrolysis of (1-&gt;4)-alpha-D-glucosidic linkages in polysaccharides so as to remove successive maltose units from the non-reducing ends of the chains.. Its activity is regulated as follows. Redox regulation; active in reducing conditions, inactive in oxidizing conditions. Low beta-amylase activity. Interacts poorly with starch or other alpha-1,4-glucan. The protein is Beta-amylase 2, chloroplastic (BAM2) of Arabidopsis thaliana (Mouse-ear cress).